Reading from the N-terminus, the 79-residue chain is Acyl carrier protein 1 (79 aa).

The Carrier domain occupies 2-77 (DNIEQRVKKI…QAIDYARANV (76 aa)). Ser-37 carries the post-translational modification O-(pantetheine 4'-phosphoryl)serine.

It belongs to the acyl carrier protein (ACP) family. Post-translationally, 4'-phosphopantetheine is transferred from CoA to a specific serine of apo-ACP by AcpS. This modification is essential for activity because fatty acids are bound in thioester linkage to the sulfhydryl of the prosthetic group.

The protein resides in the cytoplasm. Its pathway is lipid metabolism; fatty acid biosynthesis. Its function is as follows. Carrier of the growing fatty acid chain in fatty acid biosynthesis. This Ralstonia nicotianae (strain ATCC BAA-1114 / GMI1000) (Ralstonia solanacearum) protein is Acyl carrier protein 1.